A 69-amino-acid polypeptide reads, in one-letter code: UPF0248 protein AF_0420 (69 aa).

It belongs to the UPF0248 family.

The protein is UPF0248 protein AF_0420 of Archaeoglobus fulgidus (strain ATCC 49558 / DSM 4304 / JCM 9628 / NBRC 100126 / VC-16).